Here is a 230-residue protein sequence, read N- to C-terminus: Heptaprenylglyceryl phosphate synthase (230 aa).

Position 12 (Lys12) interacts with sn-glycerol 1-phosphate. Mg(2+) is bound by residues Asp14 and Thr40. Sn-glycerol 1-phosphate is bound by residues 159–164 (YIEYSG), Gly189, and 209–210 (GD).

This sequence belongs to the GGGP/HepGP synthase family. Group I subfamily. Homodimer. It depends on Mg(2+) as a cofactor.

The enzyme catalyses sn-glycerol 1-phosphate + all-trans-heptaprenyl diphosphate = 3-heptaprenyl-sn-glycero-1-phosphate + diphosphate. The protein operates within membrane lipid metabolism; glycerophospholipid metabolism. Prenyltransferase that catalyzes in vivo the transfer of the heptaprenyl moiety of heptaprenyl pyrophosphate (HepPP; 35 carbon atoms) to the C3 hydroxyl of sn-glycerol-1-phosphate (G1P), producing heptaprenylglyceryl phosphate (HepGP). This reaction is an ether-bond-formation step in the biosynthesis of archaea-type G1P-based membrane lipids found in Bacillales. The protein is Heptaprenylglyceryl phosphate synthase of Staphylococcus aureus (strain USA300).